Here is a 508-residue protein sequence, read N- to C-terminus: MGLPWYRVHTVVLNDPGRLLSVHIMHTALVSGWAGSMALYELAVFDPSDPVLDPMWRQGMFVIPFMTRLGITNSWGGWSISGGTVTNPGIWSYEGVAGAHIVFSGLCFLAAIWHWVYWDLEIFCDERTGKPSLDLPKIFGIHLFLAGVACFGFGAFHVTGLYGPGIWVSDPYGLTGKVQAVNPAWGAEGFDPFVPGGIASHHIAAGTLGILAGLFHLSVRPPQRLYKGLRMGNIETVLSSSIAAVFFAAFVVAGTMWYGSATTPIELFGPTRYQWDQGYFQQEIYRRVSDGLAENLSLSEAWSKIPEKLAFYDYIGNNPAKGGLFRAGSMDNGDGIAVGWLGHPVFRDKEGRELFVRRMPTFFETFPVVLVDEEGIVRADVPFRRAESKYSVEQVGVTVEFYGGELNGVSYSDPATVKKYARRAQLGEIFELDRATLKSDGVFRSSPRGWFTFGHATFALLFFFGHIWHGARTLFRDVFAGIDPDLDAQVEFGTFQKVGDPTTRRQAA.

6 helical membrane passes run 21–36, 101–115, 140–156, 203–218, 237–252, and 457–472; these read SVHIMHTALVSGWAGS, IVFSGLCFLAAIWHW, GIHLFLAGVACFGFGAF, IAAGTLGILAGLFHLS, VLSSSIAAVFFAAFVV, and TFALLFFFGHIWHGAR.

Belongs to the PsbB/PsbC family. PsbB subfamily. In terms of assembly, PSII is composed of 1 copy each of membrane proteins PsbA, PsbB, PsbC, PsbD, PsbE, PsbF, PsbH, PsbI, PsbJ, PsbK, PsbL, PsbM, PsbT, PsbX, PsbY, PsbZ, Psb30/Ycf12, at least 3 peripheral proteins of the oxygen-evolving complex and a large number of cofactors. It forms dimeric complexes. Requires Binds multiple chlorophylls. PSII binds additional chlorophylls, carotenoids and specific lipids. as cofactor.

It is found in the plastid. The protein localises to the chloroplast thylakoid membrane. In terms of biological role, one of the components of the core complex of photosystem II (PSII). It binds chlorophyll and helps catalyze the primary light-induced photochemical processes of PSII. PSII is a light-driven water:plastoquinone oxidoreductase, using light energy to abstract electrons from H(2)O, generating O(2) and a proton gradient subsequently used for ATP formation. The protein is Photosystem II CP47 reaction center protein of Zea mays (Maize).